The following is a 111-amino-acid chain: Large ribosomal subunit protein uL22 (111 aa).

The protein belongs to the universal ribosomal protein uL22 family. In terms of assembly, part of the 50S ribosomal subunit.

This protein binds specifically to 23S rRNA; its binding is stimulated by other ribosomal proteins, e.g. L4, L17, and L20. It is important during the early stages of 50S assembly. It makes multiple contacts with different domains of the 23S rRNA in the assembled 50S subunit and ribosome. Its function is as follows. The globular domain of the protein is located near the polypeptide exit tunnel on the outside of the subunit, while an extended beta-hairpin is found that lines the wall of the exit tunnel in the center of the 70S ribosome. This Chlamydia felis (strain Fe/C-56) (Chlamydophila felis) protein is Large ribosomal subunit protein uL22.